The sequence spans 363 residues: tRNA N6-adenosine threonylcarbamoyltransferase (363 aa).

H121 and H125 together coordinate Fe cation. Substrate-binding positions include 143 to 147 (LASGG), D176, G189, and N287. D315 lines the Fe cation pocket.

Belongs to the KAE1 / TsaD family. It depends on Fe(2+) as a cofactor.

It is found in the cytoplasm. It catalyses the reaction L-threonylcarbamoyladenylate + adenosine(37) in tRNA = N(6)-L-threonylcarbamoyladenosine(37) in tRNA + AMP + H(+). Functionally, required for the formation of a threonylcarbamoyl group on adenosine at position 37 (t(6)A37) in tRNAs that read codons beginning with adenine. Is involved in the transfer of the threonylcarbamoyl moiety of threonylcarbamoyl-AMP (TC-AMP) to the N6 group of A37, together with TsaE and TsaB. TsaD likely plays a direct catalytic role in this reaction. The chain is tRNA N6-adenosine threonylcarbamoyltransferase from Rhodopseudomonas palustris (strain BisB5).